The primary structure comprises 334 residues: Succinylglutamate desuccinylase (334 aa).

Residues H59, E62, and H151 each coordinate Zn(2+). The active site involves E215.

Belongs to the AspA/AstE family. Succinylglutamate desuccinylase subfamily. The cofactor is Zn(2+).

The catalysed reaction is N-succinyl-L-glutamate + H2O = L-glutamate + succinate. It functions in the pathway amino-acid degradation; L-arginine degradation via AST pathway; L-glutamate and succinate from L-arginine: step 5/5. In terms of biological role, transforms N(2)-succinylglutamate into succinate and glutamate. This Pseudomonas fluorescens (strain SBW25) protein is Succinylglutamate desuccinylase.